Here is a 558-residue protein sequence, read N- to C-terminus: Urocanate hydratase (558 aa).

NAD(+) is bound by residues 53–54 (GG), Gln131, 177–179 (GMG), Glu197, Arg202, 243–244 (NA), 264–268 (QTSAH), 274–275 (YL), and Tyr323. The active site involves Cys411. Gly493 lines the NAD(+) pocket.

It belongs to the urocanase family. Requires NAD(+) as cofactor.

Its subcellular location is the cytoplasm. The catalysed reaction is 4-imidazolone-5-propanoate = trans-urocanate + H2O. It functions in the pathway amino-acid degradation; L-histidine degradation into L-glutamate; N-formimidoyl-L-glutamate from L-histidine: step 2/3. Functionally, catalyzes the conversion of urocanate to 4-imidazolone-5-propionate. The chain is Urocanate hydratase from Idiomarina loihiensis (strain ATCC BAA-735 / DSM 15497 / L2-TR).